Consider the following 221-residue polypeptide: MPKGLKGKMVGREKKVIHPYSRKAAQITRESHKQDKKERLKTEKALRLNLIGDKLQWFHSHLDMKKTRYSKKDACELVERYLDRFSSELEQIELQNSIKDRQGRRHHSREAVIKQTLERERQQYEGYGFEIPDILDSNTLQTFREWDFDLKKLPNIKMRKLCADDAVPKKRKQKNILNIEKDLGELELSGPTGATTDGKLEPASESSDTDEEMTPVPVSPH.

The tract at residues 180 to 221 (EKDLGELELSGPTGATTDGKLEPASESSDTDEEMTPVPVSPH) is disordered.

Belongs to the TMA16 family. Associates with pre-60S ribosomal particles.

The protein localises to the nucleus. Functionally, involved in the biogenesis of the 60S ribosomal subunit in the nucleus. The protein is Translation machinery-associated protein 16 (Tma16) of Mus musculus (Mouse).